The following is a 401-amino-acid chain: Tyrosine--tRNA ligase (401 aa).

Residues 42-51 (PTAPDIHLGH) carry the 'HIGH' region motif. The 'KMSKS' region motif lies at 226 to 230 (KMSKS). Lys229 lines the ATP pocket. One can recognise an S4 RNA-binding domain in the interval 334–394 (MGLATLLKEA…GKRKFARVRL (61 aa)).

Belongs to the class-I aminoacyl-tRNA synthetase family. TyrS type 2 subfamily. As to quaternary structure, homodimer.

It is found in the cytoplasm. It catalyses the reaction tRNA(Tyr) + L-tyrosine + ATP = L-tyrosyl-tRNA(Tyr) + AMP + diphosphate + H(+). Catalyzes the attachment of tyrosine to tRNA(Tyr) in a two-step reaction: tyrosine is first activated by ATP to form Tyr-AMP and then transferred to the acceptor end of tRNA(Tyr). The chain is Tyrosine--tRNA ligase from Haemophilus influenzae (strain ATCC 51907 / DSM 11121 / KW20 / Rd).